The primary structure comprises 688 residues: Translation initiation factor IF-2 (688 aa).

Basic and acidic residues-rich tracts occupy residues 53 to 62 and 86 to 95; these read GKEKSEKTKE and KRDDKNEKVN. The disordered stretch occupies residues 53 to 100; that stretch reads GKEKSEKTKEEDDEIETTAKNPIKESMNNKKSNKRDDKNEKVNTENAE. Positions 187–354 constitute a tr-type G domain; the sequence is KRSPIITVMG…MILLSSEILE (168 aa). The tract at residues 196–203 is G1; the sequence is GHVDHGKT. 196-203 serves as a coordination point for GTP; that stretch reads GHVDHGKT. The segment at 221 to 225 is G2; that stretch reads GITQH. The G3 stretch occupies residues 242-245; it reads DTPG. GTP is bound by residues 242–246 and 296–299; these read DTPGH and NKID. The interval 296–299 is G4; that stretch reads NKID. A G5 region spans residues 332 to 334; it reads SAH.

Belongs to the TRAFAC class translation factor GTPase superfamily. Classic translation factor GTPase family. IF-2 subfamily.

The protein localises to the cytoplasm. One of the essential components for the initiation of protein synthesis. Protects formylmethionyl-tRNA from spontaneous hydrolysis and promotes its binding to the 30S ribosomal subunits. Also involved in the hydrolysis of GTP during the formation of the 70S ribosomal complex. The chain is Translation initiation factor IF-2 from Clostridium botulinum (strain ATCC 19397 / Type A).